Reading from the N-terminus, the 79-residue chain is Crassicorin-I (79 aa).

Residues 1-19 (MKLFLVSIVLVGMLVLAAA) form the signal peptide. A propeptide spanning residues 20-39 (RPERDIDSFDEQEEKGFVKR) is cleaved from the precursor. 3 cysteine pairs are disulfide-bonded: Cys-43/Cys-76, Cys-45/Cys-69, and Cys-59/Cys-77.

This sequence belongs to the sea anemone type 3 (BDS) potassium channel toxin family. In terms of tissue distribution, highly expressed by the mesenteries. Moderately expressed by the pharynx. Weakly expressed by the gonad and pedal disk. No expression in tentacle.

The protein resides in the secreted. Its subcellular location is the nematocyst. Its function is as follows. Peptide with both antimicrobial and neurotoxin activities. Cationic AMP with antibacterial activity against both Gram-positive bacteria (B.subtilis, MIC=11.49 ug/mL) and Gram-negative bacteria (E.coli (MIC=12.21 ug/mL) and S.enterica (MIC=11.95 ug/mL)). Shows no significant antimicrobial activity against bacteria S.aureus and P.aeruginosa, as well as the fungus C.albicans. In vivo, induces reversible paralytic activity towards the shrimp P.paucidens. May act by impairing sodium or potassium channels in the prey. This is Crassicorin-I from Urticina crassicornis (Mottled anemone).